A 649-amino-acid chain; its full sequence is Acetyl-coenzyme A synthetase (649 aa).

Residues 191–194 (RGGR), T312, and N336 each bind CoA. Residues 388–390 (GEP), 412–417 (DTWWQT), D501, and R516 each bind ATP. S524 contacts CoA. R527 is an ATP binding site. Positions 538, 540, and 543 each coordinate Mg(2+). R585 is a binding site for CoA. K610 carries the post-translational modification N6-acetyllysine.

It belongs to the ATP-dependent AMP-binding enzyme family. Mg(2+) is required as a cofactor. Acetylated. Deacetylation by the SIR2-homolog deacetylase activates the enzyme.

The enzyme catalyses acetate + ATP + CoA = acetyl-CoA + AMP + diphosphate. Its function is as follows. Catalyzes the conversion of acetate into acetyl-CoA (AcCoA), an essential intermediate at the junction of anabolic and catabolic pathways. AcsA undergoes a two-step reaction. In the first half reaction, AcsA combines acetate with ATP to form acetyl-adenylate (AcAMP) intermediate. In the second half reaction, it can then transfer the acetyl group from AcAMP to the sulfhydryl group of CoA, forming the product AcCoA. This chain is Acetyl-coenzyme A synthetase, found in Marinobacter nauticus (strain ATCC 700491 / DSM 11845 / VT8) (Marinobacter aquaeolei).